We begin with the raw amino-acid sequence, 317 residues long: Melanocyte-stimulating hormone receptor (317 aa).

A disordered region spans residues 1–28 (MPMQGAQGRLRGSLNATPPTTPHSGLAG). Residues 1-37 (MPMQGAQGRLRGSLNATPPTTPHSGLAGNQTGPWCLE) are Extracellular-facing. The N-linked (GlcNAc...) asparagine glycan is linked to Asn29. The helical transmembrane segment at 38–63 (VSIPDELFLSLGLVSLVENMLVVAAI) threads the bilayer. Residues 64-72 (AKNRNLHSP) lie on the Cytoplasmic side of the membrane. Residues 73-93 (MYYFICCLAVSDLLVSVSNVL) traverse the membrane as a helical segment. At 94-118 (ETAVMLLLEAGVLAAWAGVVQQLDN) the chain is on the extracellular side. Residues 119-140 (AIDVFICGSMVSSLCFLGAIAV) traverse the membrane as a helical segment. Residues 141 to 163 (DRYITIFYALRYHSIVTLPRARW) lie on the Cytoplasmic side of the membrane. Residues 164–183 (AIATIWAASVVCSTLFIAYY) form a helical membrane-spanning segment. Residues 184-191 (DCTAVLLC) are Extracellular-facing. The helical transmembrane segment at 192–211 (LVSFFLALVVLMAVLYMHML) threads the bilayer. The Cytoplasmic segment spans residues 212-240 (ARACLHARSIARLHKRWRPVHQGLGLKGA). The helical transmembrane segment at 241–266 (ATLSILLGSFFLCWGPFFLHLTLIVL) threads the bilayer. Over 267–279 (CPQHPTCSCVFKN) the chain is Extracellular. The chain crosses the membrane as a helical span at residues 280-300 (FKLFLTLIICNSIVDPLIYAF). The Cytoplasmic segment spans residues 301-317 (RSQELRKTLKEVLLCSW). Residue Cys315 is the site of S-palmitoyl cysteine attachment.

This sequence belongs to the G-protein coupled receptor 1 family. Interacts with MGRN1, but does not undergo MGRN1-mediated ubiquitination; this interaction competes with GNAS-binding and thus inhibits agonist-induced cAMP production. Interacts with OPN3; the interaction results in a decrease in MC1R-mediated cAMP signaling and ultimately a decrease in melanin production in melanocytes.

Its subcellular location is the cell membrane. Its function is as follows. Receptor for MSH (alpha, beta and gamma) and ACTH. The activity of this receptor is mediated by G proteins which activate adenylate cyclase. Mediates melanogenesis, the production of eumelanin (black/brown) and phaeomelanin (red/yellow), via regulation of cAMP signaling in melanocytes. In Mammuthus primigenius (Siberian woolly mammoth), this protein is Melanocyte-stimulating hormone receptor (MC1R).